The sequence spans 573 residues: MTDLSRARYAELFGPTTGDRIRLADTDLLIEITEDRGGGPGLAGDEAVFGGGKVLRESMGQGRATRAEGAPDTVITGVVVVDHWGIIKADVGIRGGRIVALGKAGNPDTMSGVHPDLVVGPSTEIIAGNGKILTAGGIDCHVHFICPQIMDEALGGGITTMIGGGTGPAEGSKATTVTPGSWHTARMLEALDGWPMNIALLGKGNTVSSESMWEQLRGGVSGFKLHEDWGSTPAAIDACLTVADAAGVQVALHSDTLNEAGFVEDTLAAIAGRAIHAYHTEGAGGGHAPDIITVAAHANVLPSSTNPTRPHTVNTLDEHLDMLMVCHHLSPKIPEDLAFAESRIRPSTIAAEDLLHDLGAISMIGSDSQAMGRIGEVVLRTWQTAHVMKRRRGFLAGDNGADNQRVQRYVAKYTICPAVAHGLEDEIGSVEVGKLADLVLWDPAFFGVRPHAVIKGGMIAWAAMGDANASIPTPQPVLPRPMFGAAPKAAAATSVHFVAPHALEDGLADRLDLSRRLVPVANVRSRGKADMPRNDAQPRIEVDPDTFTVRIDGDVWEEQPAAELPMAQRYFLF.

One can recognise a Urease domain in the interval 136 to 573; that stretch reads GGIDCHVHFI…LPMAQRYFLF (438 aa). Positions 141, 143, and 224 each coordinate Ni(2+). N6-carboxylysine is present on Lys-224. Position 226 (His-226) interacts with substrate. 2 residues coordinate Ni(2+): His-253 and His-279. His-327 serves as the catalytic Proton donor. Asp-367 serves as a coordination point for Ni(2+).

The protein belongs to the metallo-dependent hydrolases superfamily. Urease alpha subunit family. Heterotrimer of UreA (gamma), UreB (beta) and UreC (alpha) subunits. Three heterotrimers associate to form the active enzyme. Requires Ni cation as cofactor. Post-translationally, carboxylation allows a single lysine to coordinate two nickel ions.

It is found in the cytoplasm. The enzyme catalyses urea + 2 H2O + H(+) = hydrogencarbonate + 2 NH4(+). It functions in the pathway nitrogen metabolism; urea degradation; CO(2) and NH(3) from urea (urease route): step 1/1. In Rhodococcus opacus (strain B4), this protein is Urease subunit alpha.